The primary structure comprises 59 residues: MAVPARKTSKAKKRLRRTHQTVVKPEISFDEANGDYRRSHHVSLKGYYNGKKVIKGASK.

It belongs to the bacterial ribosomal protein bL32 family.

This is Large ribosomal subunit protein bL32B (rpmF2) from Enterococcus faecalis (strain ATCC 700802 / V583).